Reading from the N-terminus, the 284-residue chain is RNase adapter protein RapZ (284 aa).

8–15 contacts ATP; sequence GRSGSGKS. 56 to 59 serves as a coordination point for GTP; sequence DVRN. Residues 266–284 form an RNA-binding region; sequence RSRGKNVQLRHRTLEKRKE.

This sequence belongs to the RapZ-like family. RapZ subfamily. Homotrimer.

Its function is as follows. Modulates the synthesis of GlmS, by affecting the processing and stability of the regulatory small RNA GlmZ. When glucosamine-6-phosphate (GlcN6P) concentrations are high in the cell, RapZ binds GlmZ and targets it to cleavage by RNase E. Consequently, GlmZ is inactivated and unable to activate GlmS synthesis. Under low GlcN6P concentrations, RapZ is sequestered and inactivated by an other regulatory small RNA, GlmY, preventing GlmZ degradation and leading to synthesis of GlmS. This Hamiltonella defensa subsp. Acyrthosiphon pisum (strain 5AT) protein is RNase adapter protein RapZ.